The sequence spans 193 residues: Crossover junction endodeoxyribonuclease RuvC (193 aa).

Residues aspartate 7, glutamate 68, and aspartate 141 contribute to the active site. Residues aspartate 7, glutamate 68, and aspartate 141 each contribute to the Mg(2+) site. Residues 174–193 are disordered; sequence RQWAQATQHATRRRGVRRGM. The span at 183–193 shows a compositional bias: basic residues; that stretch reads ATRRRGVRRGM.

The protein belongs to the RuvC family. In terms of assembly, homodimer which binds Holliday junction (HJ) DNA. The HJ becomes 2-fold symmetrical on binding to RuvC with unstacked arms; it has a different conformation from HJ DNA in complex with RuvA. In the full resolvosome a probable DNA-RuvA(4)-RuvB(12)-RuvC(2) complex forms which resolves the HJ. Mg(2+) is required as a cofactor.

The protein localises to the cytoplasm. It carries out the reaction Endonucleolytic cleavage at a junction such as a reciprocal single-stranded crossover between two homologous DNA duplexes (Holliday junction).. In terms of biological role, the RuvA-RuvB-RuvC complex processes Holliday junction (HJ) DNA during genetic recombination and DNA repair. Endonuclease that resolves HJ intermediates. Cleaves cruciform DNA by making single-stranded nicks across the HJ at symmetrical positions within the homologous arms, yielding a 5'-phosphate and a 3'-hydroxyl group; requires a central core of homology in the junction. The consensus cleavage sequence is 5'-(A/T)TT(C/G)-3'. Cleavage occurs on the 3'-side of the TT dinucleotide at the point of strand exchange. HJ branch migration catalyzed by RuvA-RuvB allows RuvC to scan DNA until it finds its consensus sequence, where it cleaves and resolves the cruciform DNA. The protein is Crossover junction endodeoxyribonuclease RuvC of Bifidobacterium animalis subsp. lactis (strain AD011).